A 30-amino-acid chain; its full sequence is KQATCSIPYEYSNGKFKRTLYYSNGVYANS.

In terms of tissue distribution, expressed by the venom gland.

It is found in the secreted. The polypeptide is Hainantoxin F7-28.42 (Cyriopagopus hainanus (Chinese bird spider)).